Reading from the N-terminus, the 91-residue chain is Bacterial microcompartment shell protein PduJ (91 aa).

Positions A4 to P88 constitute a BMC domain.

This sequence belongs to the bacterial microcompartments protein family. As to quaternary structure, homohexamer with a central pore. Interacts with PduP, which targets PduP to the BMC. Interacts with shell protein PduA.

Its subcellular location is the bacterial microcompartment. The protein operates within polyol metabolism; 1,2-propanediol degradation. In terms of biological role, one of the major shell proteins of the bacterial microcompartment (BMC) dedicated to 1,2-propanediol (1,2-PD) degradation. At least one of PduA or PduJ is required for BMC assembly; it must be encoded as the first gene in the pdu operon. Required for structural integrity of BMCs and to mitigate propionaldehyde toxicity, probably joins facets responsible for BMC closure. Probably the hub for binding multiple enzymes to the interior of the BMC. Its function is as follows. Expression of a cosmid containing the full 21-gene pdu operon in E.coli allows E.coli to grow on 1,2-PD with the appearance of BMCs in its cytoplasm. Overexpression of this protein leads to an internal structure with a whorled architecture. Functionally, the 1,2-PD-specific bacterial microcompartment (BMC) concentrates low levels of 1,2-PD catabolic enzymes, concentrates volatile reaction intermediates thus enhancing pathway flux and keeps the level of toxic, mutagenic propionaldehyde low. The chain is Bacterial microcompartment shell protein PduJ from Citrobacter freundii.